The following is a 1483-amino-acid chain: Chromosome partition protein MukB (1483 aa).

34 to 41 provides a ligand contact to ATP; sequence GGNGAGKS. Coiled coils occupy residues 326–418, 444–480, 509–601, 780–804, 837–923, 977–1115, and 1209–1265; these read LEAD…QYNQ, LETF…QAYQ, RHLA…MQRA, RAAC…FATL, EIRQ…AKLE, EMLS…TAKA, and VEAI…LQNV. Residues 666 to 783 are flexible hinge; sequence PGGSEDQRLN…EVPLFGRAAC (118 aa).

Belongs to the SMC family. MukB subfamily. In terms of assembly, homodimerization via its hinge domain. Binds to DNA via its C-terminal region. Interacts, and probably forms a ternary complex, with MukE and MukF via its C-terminal region. The complex formation is stimulated by calcium or magnesium. Interacts with tubulin-related protein FtsZ.

The protein localises to the cytoplasm. It is found in the nucleoid. In terms of biological role, plays a central role in chromosome condensation, segregation and cell cycle progression. Functions as a homodimer, which is essential for chromosome partition. Involved in negative DNA supercoiling in vivo, and by this means organize and compact chromosomes. May achieve or facilitate chromosome segregation by condensation DNA from both sides of a centrally located replisome during cell division. The polypeptide is Chromosome partition protein MukB (Shigella dysenteriae serotype 1 (strain Sd197)).